Here is a 163-residue protein sequence, read N- to C-terminus: NADH-quinone oxidoreductase subunit 9 (163 aa).

4Fe-4S ferredoxin-type domains lie at 54 to 84 (LRRY…IDAE) and 94 to 123 (TRYD…EGPN). The [4Fe-4S] cluster site is built by C64, C67, C70, C74, C103, C106, C109, and C113.

Belongs to the complex I 23 kDa subunit family. NDH-1 is composed of at least 14 different subunits, Nqo1 to Nqo14. The complex has a L-shaped structure, with the hydrophobic arm (subunits Nqo7, Nqo8, Nqo10 to Nqo14) embedded in the inner membrane and the hydrophilic peripheral arm (subunits Nqo1 to Nqo6, Nqo9) protruding into the bacterial cytoplasm. The hydrophilic domain contains all the redox centers. [4Fe-4S] cluster is required as a cofactor.

The protein resides in the cell inner membrane. It carries out the reaction a quinone + NADH + 5 H(+)(in) = a quinol + NAD(+) + 4 H(+)(out). Its function is as follows. NDH-1 shuttles electrons from NADH, via FMN and iron-sulfur (Fe-S) centers, to quinones in the respiratory chain. The immediate electron acceptor for the enzyme in this species is believed to be ubiquinone. Couples the redox reaction to proton translocation (for every two electrons transferred, four hydrogen ions are translocated across the cytoplasmic membrane), and thus conserves the redox energy in a proton gradient. The polypeptide is NADH-quinone oxidoreductase subunit 9 (Paracoccus denitrificans).